Here is a 395-residue protein sequence, read N- to C-terminus: Multidrug resistance protein MdtL (395 aa).

12 consecutive transmembrane segments (helical) span residues 4–24 (FLLC…MYLV), 42–62 (IAFS…GKIA), 69–89 (PVAI…SRAS), 93–113 (LFLS…VVAF), 131–151 (LLNG…HLIM), 158–178 (SLFY…LFIL), 217–237 (VSVI…VMGF), 247–267 (ALTA…LGLF), 271–291 (TLML…SLAH), 295–315 (VTLF…GVAM), 333–353 (LGIA…ILGI), and 358–378 (MLIG…FSVA).

Belongs to the major facilitator superfamily. DHA1 family. MdtL (TC 2.A.1.2.22) subfamily.

The protein resides in the cell inner membrane. This is Multidrug resistance protein MdtL from Salmonella heidelberg (strain SL476).